A 153-amino-acid chain; its full sequence is MKKIQLFTDGSCLGNPGPGGYGAVMIYNEHCKELSEGFLLTTNNRMEMLACIKALQSLTEPCEVELTTDSQYVRQGITLWIHNWKKRGWKTAAKAPVKNVDLWKALDAAQEKHKVAWHWVKGHSGHPENERCDDLARRAAENNPTQEDIGYEG.

The RNase H type-1 domain occupies 1–141 (MKKIQLFTDG…CDDLARRAAE (141 aa)). 4 residues coordinate Mg(2+): aspartate 9, glutamate 47, aspartate 69, and aspartate 133.

Belongs to the RNase H family. Monomer. The cofactor is Mg(2+).

It is found in the cytoplasm. It catalyses the reaction Endonucleolytic cleavage to 5'-phosphomonoester.. In terms of biological role, endonuclease that specifically degrades the RNA of RNA-DNA hybrids. The sequence is that of Ribonuclease H from Psychromonas ingrahamii (strain DSM 17664 / CCUG 51855 / 37).